A 351-amino-acid chain; its full sequence is Ferredoxin--NADP reductase (351 aa).

FAD is bound by residues Thr-14, Asp-33, Gln-41, Tyr-46, Ala-86, Phe-121, Asp-287, and Thr-328.

It belongs to the ferredoxin--NADP reductase type 2 family. Homodimer. The cofactor is FAD.

The enzyme catalyses 2 reduced [2Fe-2S]-[ferredoxin] + NADP(+) + H(+) = 2 oxidized [2Fe-2S]-[ferredoxin] + NADPH. This Flavobacterium psychrophilum (strain ATCC 49511 / DSM 21280 / CIP 103535 / JIP02/86) protein is Ferredoxin--NADP reductase.